The chain runs to 71 residues: U-scoloptoxin(21)-Sm1a (71 aa).

An N-terminal signal peptide occupies residues 1 to 21 (MKSVIFALFLVYLLIVRAAEA). The tract at residues 45 to 71 (IELANDPNGPGRRRRAPAENEDFLKHS) is disordered. The span at 60–71 (APAENEDFLKHS) shows a compositional bias: basic and acidic residues.

It belongs to the scoloptoxin-21 family. Expressed by the venom gland.

It is found in the secreted. The chain is U-scoloptoxin(21)-Sm1a from Scolopendra morsitans (Tanzanian blue ringleg centipede).